A 649-amino-acid chain; its full sequence is Exolysin (649 aa).

The helical transmembrane segment at 37–57 (LIYTIIVLVVAAVVGLVIFIV) threads the bilayer. Residues 184–268 (KDIIDNKLRE…KKATDDFKKK (85 aa)) are a coiled coil. Residues 258–275 (AKKATDDFKKKKQADKNK) are compositionally biased toward basic and acidic residues. A disordered region spans residues 258–325 (AKKATDDFKK…QFQTRDSKGQ (68 aa)). Residues 278 to 312 (ASKPSPGPKPAPKPSPGPKPAPKPSPGPKPSPGPS) show a composition bias toward pro residues. Residues 407–649 (GGGGGGGNVS…KNVKISKWSP (243 aa)) are catalytic.

It depends on Ca(2+) as a cofactor. Mg(2+) serves as cofactor.

It is found in the membrane. The protein resides in the virion. With respect to regulation, inhibited by Mn(2+), Cu(2+), Co(2+), Fe(2+), Zn(2+), Ni(2+), EDTA and EGTA. Functionally, during viral entry, involved in the degradation of the host cell wall at the site of attachment. The polypeptide is Exolysin (Chlorella (PBCV-1)).